A 389-amino-acid polypeptide reads, in one-letter code: Phospho-N-acetylmuramoyl-pentapeptide-transferase (389 aa).

10 helical membrane passes run 25-45, 73-93, 97-117, 135-155, 190-210, 222-242, 258-278, 286-306, 311-331, and 366-386; these read RAVMATITALGIGLVCGPWVI, TMGGVLILIGIAVATLLWGDL, FIWIVMLVTFGFGVIGWVDDY, FWQSVIGLFAAVYLAFSVSEA, ISYPLGVWGFIVLTYFVIVGA, GLVIMPVVLVGASLGVFAYVM, GAGELLIFCSAMGGAGLAFLW, VFMGDVGALALGGALGTVAVI, IVLFIMGGIFVAETLSVMLQV, and QVVVRFWIITLMLCLFGLTTL.

The protein belongs to the glycosyltransferase 4 family. MraY subfamily. It depends on Mg(2+) as a cofactor.

It is found in the cell inner membrane. It catalyses the reaction UDP-N-acetyl-alpha-D-muramoyl-L-alanyl-gamma-D-glutamyl-meso-2,6-diaminopimeloyl-D-alanyl-D-alanine + di-trans,octa-cis-undecaprenyl phosphate = di-trans,octa-cis-undecaprenyl diphospho-N-acetyl-alpha-D-muramoyl-L-alanyl-D-glutamyl-meso-2,6-diaminopimeloyl-D-alanyl-D-alanine + UMP. It participates in cell wall biogenesis; peptidoglycan biosynthesis. Functionally, catalyzes the initial step of the lipid cycle reactions in the biosynthesis of the cell wall peptidoglycan: transfers peptidoglycan precursor phospho-MurNAc-pentapeptide from UDP-MurNAc-pentapeptide onto the lipid carrier undecaprenyl phosphate, yielding undecaprenyl-pyrophosphoryl-MurNAc-pentapeptide, known as lipid I. This is Phospho-N-acetylmuramoyl-pentapeptide-transferase from Burkholderia cenocepacia (strain HI2424).